The following is a 591-amino-acid chain: V-type ATP synthase alpha chain (591 aa).

Position 233-240 (233-240 (GPFGAGKT)) interacts with ATP.

It belongs to the ATPase alpha/beta chains family.

The enzyme catalyses ATP + H2O + 4 H(+)(in) = ADP + phosphate + 5 H(+)(out). Functionally, produces ATP from ADP in the presence of a proton gradient across the membrane. The V-type alpha chain is a catalytic subunit. In Streptococcus pyogenes serotype M12 (strain MGAS2096), this protein is V-type ATP synthase alpha chain.